The sequence spans 464 residues: Tryprostatin B synthase (464 aa).

Brevianamide F contacts are provided by M94 and E102. R113, K201, and Y203 together coordinate dimethylallyl diphosphate. Y205 serves as a coordination point for brevianamide F. K294, Y296, Q380, Y382, Y446, and Y450 together coordinate dimethylallyl diphosphate.

This sequence belongs to the tryptophan dimethylallyltransferase family.

The catalysed reaction is brevianamide F + dimethylallyl diphosphate = tryprostatin B + diphosphate. It functions in the pathway mycotoxin biosynthesis. Functionally, brevianamide F prenyltransferase; part of the gene cluster that mediates the biosynthesis of fumitremorgins, indole alkaloids that carry not only intriguing chemical structures, but also interesting biological and pharmacological activities. The biosynthesis of fumitremorgin-type alkaloids begins by condensation of the two amino acids L-tryptophan and L-proline to brevianamide F, catalyzed by the non-ribosomal peptide synthetase ftmA. Brevianamide F is then prenylated by the prenyltransferase ftmPT1/ftmB in the presence of dimethylallyl diphosphate, resulting in the formation of tryprostatin B. The three cytochrome P450 monooxygenases, ftmP450-1/ftmC, ftmP450-2/ftmE and ftmP450-3/FtmG, are responsible for the conversion of tryprostatin B to 6-hydroxytryprostatin B, tryprostatin A to fumitremorgin C and fumitremorgin C to 12,13-dihydroxyfumitremorgin C, respectively. The putative methyltransferase ftmMT/ftmD is expected for the conversion of 6-hydroxytryprostatin B to tryprostatin A. FtmPT2/FtmH catalyzes the prenylation of 12,13-dihydroxyfumitre-morgin C in the presence of dimethylallyl diphosphate, resulting in the formation of fumitremorgin B. Fumitremorgin B is further converted to verruculogen by ftmOx1/ftmF via the insertion of an endoperoxide bond between the two prenyl moieties. In some fungal species, verruculogen is further converted to fumitremorgin A, but the enzymes involved in this step have not been identified yet. The protein is Tryprostatin B synthase of Aspergillus fumigatus (Neosartorya fumigata).